The sequence spans 451 residues: UPF0210 protein CLH_1879 (451 aa).

This sequence belongs to the UPF0210 family. As to quaternary structure, homodimer.

This chain is UPF0210 protein CLH_1879, found in Clostridium botulinum (strain Alaska E43 / Type E3).